A 292-amino-acid chain; its full sequence is Tetratricopeptide repeat protein 1 (292 aa).

The disordered stretch occupies residues 20–125; the sequence is TDPQEAECLH…SSRLKEEGNE (106 aa). Basic and acidic residues-rich tracts occupy residues 36–49 and 75–85; these read KEQH…KDVD and GADKLENKPED. The segment covering 86–98 has biased composition (acidic residues); that stretch reads DMNPSELDEEYLM. Ser90 bears the Phosphoserine mark. Positions 99 to 125 are enriched in basic and acidic residues; that stretch reads ELEKNMPDEEKKRRREESSRLKEEGNE. 3 TPR repeats span residues 116-149, 155-188, and 189-222; these read SSRL…CPSC, SVLF…NPSY, and IRAI…DPSV.

As to quaternary structure, interacts with the GAP domain of NF1. Interacts (via TPR repeats) with HSP90AA1 and HSPA8.

In Bos taurus (Bovine), this protein is Tetratricopeptide repeat protein 1 (TTC1).